The primary structure comprises 98 residues: Co-chaperonin GroES 1 (98 aa).

This sequence belongs to the GroES chaperonin family. Heptamer of 7 subunits arranged in a ring. Interacts with the chaperonin GroEL.

Its subcellular location is the cytoplasm. In terms of biological role, together with the chaperonin GroEL, plays an essential role in assisting protein folding. The GroEL-GroES system forms a nano-cage that allows encapsulation of the non-native substrate proteins and provides a physical environment optimized to promote and accelerate protein folding. GroES binds to the apical surface of the GroEL ring, thereby capping the opening of the GroEL channel. This Rhizobium meliloti (strain 1021) (Ensifer meliloti) protein is Co-chaperonin GroES 1.